Here is a 431-residue protein sequence, read N- to C-terminus: Glucose-1-phosphate adenylyltransferase (431 aa).

Lys39 is a beta-D-fructose 1,6-bisphosphate binding site. AMP-binding residues include Arg40, His46, and Arg52. Residues Tyr114, Gly179, 194–195, and Ser212 contribute to the alpha-D-glucose 1-phosphate site; that span reads EK. Residues Glu370 and Arg386 each coordinate AMP. Residues 419–423 and 429–431 each bind beta-D-fructose 1,6-bisphosphate; these read REMLR and QER.

The protein belongs to the bacterial/plant glucose-1-phosphate adenylyltransferase family. Homotetramer.

The enzyme catalyses alpha-D-glucose 1-phosphate + ATP + H(+) = ADP-alpha-D-glucose + diphosphate. It participates in glycan biosynthesis; glycogen biosynthesis. With respect to regulation, allosterically activated by fructose-1,6-bisphosphate (F16BP) and inhibited by AMP. Its function is as follows. Involved in the biosynthesis of ADP-glucose, a building block required for the elongation reactions to produce glycogen. Catalyzes the reaction between ATP and alpha-D-glucose 1-phosphate (G1P) to produce pyrophosphate and ADP-Glc. The sequence is that of Glucose-1-phosphate adenylyltransferase from Salmonella typhi.